Consider the following 93-residue polypeptide: Large ribosomal subunit protein uL23cz/uL23cy (93 aa).

The protein belongs to the universal ribosomal protein uL23 family. As to quaternary structure, part of the 50S ribosomal subunit.

The protein resides in the plastid. The protein localises to the chloroplast. Functionally, binds to 23S rRNA. This is Large ribosomal subunit protein uL23cz/uL23cy (rpl23-A) from Glycine max (Soybean).